The sequence spans 255 residues: Hydroxyacylglutathione hydrolase (255 aa).

H56, H58, D60, H61, H114, D133, and H171 together coordinate Zn(2+).

The protein belongs to the metallo-beta-lactamase superfamily. Glyoxalase II family. Monomer. Requires Zn(2+) as cofactor.

The catalysed reaction is an S-(2-hydroxyacyl)glutathione + H2O = a 2-hydroxy carboxylate + glutathione + H(+). Its pathway is secondary metabolite metabolism; methylglyoxal degradation; (R)-lactate from methylglyoxal: step 2/2. In terms of biological role, thiolesterase that catalyzes the hydrolysis of S-D-lactoyl-glutathione to form glutathione and D-lactic acid. The chain is Hydroxyacylglutathione hydrolase from Nitrobacter hamburgensis (strain DSM 10229 / NCIMB 13809 / X14).